The chain runs to 402 residues: Dihydrolipoyllysine-residue acetyltransferase component of pyruvate dehydrogenase complex (402 aa).

The region spanning 2–77 (ANEFKFTDVG…HIGQVMAVID (76 aa)) is the Lipoyl-binding domain. K43 carries the post-translational modification N6-lipoyllysine. Disordered regions lie at residues 82–110 (AAAP…APVT) and 143–172 (PQPT…PSGE). 2 stretches are compositionally biased toward pro residues: residues 87–107 (APQP…PTPA) and 143–162 (PQPT…PTPA). H374 is a catalytic residue.

Belongs to the 2-oxoacid dehydrogenase family. In terms of assembly, forms a 24-polypeptide structural core with octahedral symmetry. (R)-lipoate is required as a cofactor.

It catalyses the reaction N(6)-[(R)-dihydrolipoyl]-L-lysyl-[protein] + acetyl-CoA = N(6)-[(R)-S(8)-acetyldihydrolipoyl]-L-lysyl-[protein] + CoA. Functionally, the pyruvate dehydrogenase complex catalyzes the overall conversion of pyruvate to acetyl-CoA and CO(2). It contains multiple copies of three enzymatic components: pyruvate dehydrogenase (E1), dihydrolipoamide acetyltransferase (E2) and lipoamide dehydrogenase (E3). This chain is Dihydrolipoyllysine-residue acetyltransferase component of pyruvate dehydrogenase complex (pdhC), found in Mycoplasma pneumoniae (strain ATCC 29342 / M129 / Subtype 1) (Mycoplasmoides pneumoniae).